We begin with the raw amino-acid sequence, 570 residues long: Serine/threonine-protein kinase flr-4 (570 aa).

Residues 40-331 enclose the Protein kinase domain; sequence YKYIQDLGKG…KLRIQIKKIL (292 aa). Residues 46–54 and K67 each bind ATP; that span reads LGKGRFGTV. D172 acts as the Proton acceptor in catalysis. A disordered region spans residues 338-369; sequence EEETDISHPISNSNTDSSTAISHNHSNDRKVG. The segment covering 346-361 has biased composition (polar residues); it reads PISNSNTDSSTAISHN. Transmembrane regions (helical) follow at residues 400–420, 425–445, and 471–491; these read IMQIFVASGYYLSRILYFLNI, ICYLLLFLSLGITALGSFLLI, and LIISGILIVLMFALLFSCCMV. Residues 550–570 are disordered; it reads VRRNHDDYYYDESSGPANEEN.

The protein belongs to the protein kinase superfamily. Ser/Thr protein kinase family. As to expression, present in the intestinal cells from comma-stage embryos through the adult stage, although the intestinal expression is weaker after the L1 stage. Accumulates at the cell membrane of intestinal cells, especially the lateral membrane intervening the intestinal cells. Also detected in the muscles of the pharyngeal isthmus from the 3-fold embryonic stage, and in a pair of head neurons, which correspond to the AUA neurons, from the late L1 stage (at protein level).

Its subcellular location is the membrane. The enzyme catalyses L-seryl-[protein] + ATP = O-phospho-L-seryl-[protein] + ADP + H(+). The catalysed reaction is L-threonyl-[protein] + ATP = O-phospho-L-threonyl-[protein] + ADP + H(+). Probable serine-threonine protein kinase involved in the control of defecation rhythms. Required to increase the length of defecation cycle period. Acts in a cell-functional rather than developmental aspect in the regulation of defecation rhythms. Prevents preferential activation of the p38 MAPK pathway in response to the levels of vitamin B12 in different food types during larval development, thereby regulating the expression of cytoprotective genes, modulating life span and stress tolerance. The protein is Serine/threonine-protein kinase flr-4 (flr-4) of Caenorhabditis elegans.